The primary structure comprises 63 residues: uncharacterized protein (63 aa).

A helical transmembrane segment spans residues 15-37; that stretch reads ISHCHLPLSPATAIAIIICFRIV.

It is found in the membrane. This is an uncharacterized protein from Saccharomyces cerevisiae (strain ATCC 204508 / S288c) (Baker's yeast).